The sequence spans 1176 residues: Translation initiation factor IF-2 (1176 aa).

Composition is skewed to low complexity over residues 32-44 (IAAK…ISDS), 57-79 (ASPS…AGKS), 94-166 (APVA…AAPS), and 193-235 (KPTP…VKPT). Disordered stretches follow at residues 32 to 502 (IAAK…QRQK) and 535 to 567 (RPAK…RQRR). Residues 251-270 (APPPASTPRPAPSRPTPRPA) show a composition bias toward pro residues. 2 stretches are compositionally biased toward low complexity: residues 388–409 (GRPG…GGMR) and 439–469 (NRPT…FRPG). Basic and acidic residues predominate over residues 478–492 (GRPDWDDSAKLEALR). Residues 553–567 (VRKRRKETARQRQRR) show a composition bias toward basic residues. Positions 668 to 840 (RRPPVVTVMG…LLLVTEVEDL (173 aa)) constitute a tr-type G domain. The G1 stretch occupies residues 677 to 684 (GHVDHGKT). 677-684 (GHVDHGKT) serves as a coordination point for GTP. Residues 702 to 706 (GITQH) form a G2 region. The segment at 727-730 (DTPG) is G3. Residues 727–731 (DTPGH) and 781–784 (NKID) each bind GTP. The G4 stretch occupies residues 781-784 (NKID). Residues 817–819 (SAI) form a G5 region.

It belongs to the TRAFAC class translation factor GTPase superfamily. Classic translation factor GTPase family. IF-2 subfamily.

It localises to the cytoplasm. Its function is as follows. One of the essential components for the initiation of protein synthesis. Protects formylmethionyl-tRNA from spontaneous hydrolysis and promotes its binding to the 30S ribosomal subunits. Also involved in the hydrolysis of GTP during the formation of the 70S ribosomal complex. This Synechococcus sp. (strain CC9902) protein is Translation initiation factor IF-2.